We begin with the raw amino-acid sequence, 389 residues long: Large envelope protein (389 aa).

2 stretches are compositionally biased toward polar residues: residues 1 to 10 and 85 to 95; these read MGQNLSTSNP and STNRQTGRQPT. Disordered stretches follow at residues 1-54 and 73-106; these read MGQN…AFGL and ILHTVPANPPPASTNRQTGRQPTPLSPPLRDTHP. The N-myristoyl glycine; by host moiety is linked to residue Gly2. Residues 2–108 are pre-S1; sequence GQNLSTSNPL…PPLRDTHPQA (107 aa). Residues 2–163 form a pre-S region; the sequence is GQNLSTSNPL…FSRIGDPVTN (162 aa). The Virion surface; in external conformation segment spans residues 2-170; sequence GQNLSTSNPL…VTNMENITSG (169 aa). The Intravirion; in internal conformation segment spans residues 2–242; sequence GQNLSTSNPL…PGYRWMCLRG (241 aa). Residues 109–163 form a pre-S2 region; that stretch reads VQWNSTTFHQTLQDPRVRGLYFPAGGSSSGTVNPVPTTASPLSSIFSRIGDPVTN. A helical transmembrane segment spans residues 171–191; that stretch reads FLGPLLVLQAGFFLLTRILTI. The Intravirion; in external conformation segment spans residues 192–242; that stretch reads PQSLDSWWTSLNFRGGTTVCLGQNSQSPTSNHSPTSCPPTCPGYRWMCLRG. Residues 243-263 traverse the membrane as a helical segment; that stretch reads FIIFLFILLLCLIFLLVLLEY. The Virion surface portion of the chain corresponds to 264–337; it reads QGMLHVCPLI…WASVRFSWLS (74 aa). A glycan (N-linked (GlcNAc...) asparagine; by host) is linked at Asn309. A helical membrane pass occupies residues 338–358; it reads LLVPFVQWFVGLSPTVWLSAI. At 359–364 the chain is on the intravirion side; that stretch reads WMMWYW. The chain crosses the membrane as a helical span at residues 365-387; that stretch reads GPSLYSILSPFLPLLPIFFCLWV. The Virion surface segment spans residues 388-389; that stretch reads YI.

Belongs to the orthohepadnavirus major surface antigen family. Li-HBsAg interacts with capsid protein and with HDV Large delta antigen. Isoform M associates with host chaperone CANX through its pre-S2 N glycan. This association may be essential for M proper secretion. In terms of processing, isoform M is N-terminally acetylated by host at a ratio of 90%, and N-glycosylated by host at the pre-S2 region. Myristoylated.

The protein localises to the virion membrane. The large envelope protein exists in two topological conformations, one which is termed 'external' or Le-HBsAg and the other 'internal' or Li-HBsAg. In its external conformation the protein attaches the virus to cell receptors and thereby initiating infection. This interaction determines the species specificity and liver tropism. This attachment induces virion internalization predominantly through caveolin-mediated endocytosis. The large envelope protein also assures fusion between virion membrane and endosomal membrane. In its internal conformation the protein plays a role in virion morphogenesis and mediates the contact with the nucleocapsid like a matrix protein. Functionally, the middle envelope protein plays an important role in the budding of the virion. It is involved in the induction of budding in a nucleocapsid independent way. In this process the majority of envelope proteins bud to form subviral lipoprotein particles of 22 nm of diameter that do not contain a nucleocapsid. This is Large envelope protein from Homo sapiens (Human).